Here is a 426-residue protein sequence, read N- to C-terminus: D-tagatose-1,6-bisphosphate aldolase subunit KbaZ (426 aa).

The protein belongs to the GatZ/KbaZ family. KbaZ subfamily. Forms a complex with KbaY.

Its pathway is carbohydrate metabolism; D-tagatose 6-phosphate degradation; D-glyceraldehyde 3-phosphate and glycerone phosphate from D-tagatose 6-phosphate: step 2/2. Functionally, component of the tagatose-1,6-bisphosphate aldolase KbaYZ that is required for full activity and stability of the Y subunit. Could have a chaperone-like function for the proper and stable folding of KbaY. When expressed alone, KbaZ does not show any aldolase activity. The sequence is that of D-tagatose-1,6-bisphosphate aldolase subunit KbaZ from Escherichia coli O81 (strain ED1a).